Reading from the N-terminus, the 793-residue chain is Protein translocase subunit SecA 2 (793 aa).

ATP-binding positions include Q77, 95–99, and D493; that span reads GEGKT.

It belongs to the SecA family. As to quaternary structure, monomer and homodimer (Potential). Part of the accessory SecA2/SecY2 protein translocation apparatus required to export cell wall protein GspB.

The protein localises to the cell membrane. It is found in the cytoplasm. The enzyme catalyses ATP + H2O + cellular proteinSide 1 = ADP + phosphate + cellular proteinSide 2.. In terms of biological role, part of the accessory SecA2/SecY2 system specifically required to export GspB, a serine-rich repeat cell wall protein encoded upstream in the same operon. The protein is Protein translocase subunit SecA 2 of Streptococcus gordonii.